The chain runs to 210 residues: Fibrillarin-like rRNA/tRNA 2'-O-methyltransferase (210 aa).

Residues 1–34 (MTLPSGVERHDFGGETSLATQGQPVYGERTDGDW) are disordered. S-adenosyl-L-methionine is bound by residues 71–72 (TT), 87–88 (EF), 112–113 (DA), and 132–135 (DVAT).

Belongs to the methyltransferase superfamily. Fibrillarin family. In terms of assembly, interacts with nop5. Component of box C/D small ribonucleoprotein (sRNP) particles that contain rpl7ae, FlpA and nop5, plus a guide RNA.

In terms of biological role, involved in pre-rRNA and tRNA processing. Utilizes the methyl donor S-adenosyl-L-methionine to catalyze the site-specific 2'-hydroxyl methylation of ribose moieties in rRNA and tRNA. Site specificity is provided by a guide RNA that base pairs with the substrate. Methylation occurs at a characteristic distance from the sequence involved in base pairing with the guide RNA. This is Fibrillarin-like rRNA/tRNA 2'-O-methyltransferase from Haloarcula marismortui (strain ATCC 43049 / DSM 3752 / JCM 8966 / VKM B-1809) (Halobacterium marismortui).